The sequence spans 251 residues: METVQSIITEWTDPKSWEKLVQHSFKDSNWKELIDPVNYKFNFGVTPFSQFQIIPIVLVIYLVTIFSIKFLMKNRKPFSLKFISILHNAILCIWSLIMCVGVLYEIIKRVSNEGPLFTVCEDPNGGFDKGVTYYWSYIFYISKFYELLDTVIIVLKKKPLIFLHVYHHCKTVWWKKYITMIQILQFVCLGIAGVLHVYTINTIGCFTHYPAFAAAYSINFSFLFLFSKFFVKSYTPKNSNSNTNIKSKKID.

The next 5 helical transmembrane spans lie at 51–71 (FQIIPIVLVIYLVTIFSIKFL), 82–102 (FISILHNAILCIWSLIMCVGV), 135–155 (WSYIFYISKFYELLDTVIIVL), 177–197 (YITMIQILQFVCLGIAGVLHV), and 211–231 (AFAAAYSINFSFLFLFSKFFV).

It belongs to the ELO family.

Its subcellular location is the membrane. It carries out the reaction a very-long-chain acyl-CoA + malonyl-CoA + H(+) = a very-long-chain 3-oxoacyl-CoA + CO2 + CoA. Its function is as follows. Could be implicated in synthesis of very long chain fatty acids. The protein is Putative fatty acid elongase DDB_G0274669 of Dictyostelium discoideum (Social amoeba).